Consider the following 127-residue polypeptide: Glycine cleavage system H protein (127 aa).

In terms of domain architecture, Lipoyl-binding spans 22–104; sequence EVVIGITHFA…YEGAWMVKVE (83 aa). An N6-lipoyllysine modification is found at K63.

It belongs to the GcvH family. In terms of assembly, the glycine cleavage system is composed of four proteins: P, T, L and H. (R)-lipoate serves as cofactor.

In terms of biological role, the glycine cleavage system catalyzes the degradation of glycine. The H protein shuttles the methylamine group of glycine from the P protein to the T protein. Functionally, is also involved in protein lipoylation via its role as an octanoyl/lipoyl carrier protein intermediate. The protein is Glycine cleavage system H protein of Bacillus cereus (strain ZK / E33L).